Consider the following 860-residue polypeptide: DNA mismatch repair protein MutS (860 aa).

621-628 (GPNMGGKS) contacts ATP.

Belongs to the DNA mismatch repair MutS family.

This protein is involved in the repair of mismatches in DNA. It is possible that it carries out the mismatch recognition step. This protein has a weak ATPase activity. The sequence is that of DNA mismatch repair protein MutS from Salmonella arizonae (strain ATCC BAA-731 / CDC346-86 / RSK2980).